Consider the following 257-residue polypeptide: LexA repressor (257 aa).

The H-T-H motif DNA-binding region spans 64–84; that stretch reads FREIGEAAGLKSPSSVKHQLQ. Catalysis depends on for autocatalytic cleavage activity residues serine 181 and lysine 218.

This sequence belongs to the peptidase S24 family. In terms of assembly, homodimer.

The enzyme catalyses Hydrolysis of Ala-|-Gly bond in repressor LexA.. Represses a number of genes involved in the response to DNA damage (SOS response), including recA and lexA. In the presence of single-stranded DNA, RecA interacts with LexA causing an autocatalytic cleavage which disrupts the DNA-binding part of LexA, leading to derepression of the SOS regulon and eventually DNA repair. The protein is LexA repressor of Bifidobacterium adolescentis (strain ATCC 15703 / DSM 20083 / NCTC 11814 / E194a).